A 458-amino-acid polypeptide reads, in one-letter code: Serine--tRNA ligase (458 aa).

255 to 257 (TSE) is an L-serine binding site. ATP is bound by residues 286–288 (RKE) and Val-302. An L-serine-binding site is contributed by Glu-309. 373 to 376 (ELVS) serves as a coordination point for ATP. Thr-409 lines the L-serine pocket.

Belongs to the class-II aminoacyl-tRNA synthetase family. Type-1 seryl-tRNA synthetase subfamily. Homodimer. The tRNA molecule binds across the dimer.

It is found in the cytoplasm. The catalysed reaction is tRNA(Ser) + L-serine + ATP = L-seryl-tRNA(Ser) + AMP + diphosphate + H(+). It carries out the reaction tRNA(Sec) + L-serine + ATP = L-seryl-tRNA(Sec) + AMP + diphosphate + H(+). The protein operates within aminoacyl-tRNA biosynthesis; selenocysteinyl-tRNA(Sec) biosynthesis; L-seryl-tRNA(Sec) from L-serine and tRNA(Sec): step 1/1. In terms of biological role, catalyzes the attachment of serine to tRNA(Ser). Is also able to aminoacylate tRNA(Sec) with serine, to form the misacylated tRNA L-seryl-tRNA(Sec), which will be further converted into selenocysteinyl-tRNA(Sec). In Ignicoccus hospitalis (strain KIN4/I / DSM 18386 / JCM 14125), this protein is Serine--tRNA ligase.